Consider the following 770-residue polypeptide: Transducin-like enhancer protein 1 (770 aa).

The tract at residues 1–131 (MFPQSRHPTP…IIGQQQLQAQ (131 aa)) is q domain. 2 disordered regions span residues 128-157 (LQAQHLSHGHGPPVPLTPHPSGLQPPGIPP) and 176-348 (HLAI…PAID). Residues 132–199 (HLSHGHGPPV…HHRDREPGTS (68 aa)) form a GP domain region. Composition is skewed to basic and acidic residues over residues 178 to 196 (AIKDDKKHHDAEHHRDREP) and 209 to 246 (RGTDKRRNGPEFSNDIKKRKVDDKDSSHYDSDGDKSDD). The segment at 200-268 (NSLLVPDSLR…SPRASPAHSP (69 aa)) is ccN domain. The short motif at 225–228 (KKRK) is the Nuclear localization signal element. Serine 239 bears the Phosphoserine mark. Over residues 257–266 (PSSPRASPAH) the composition is skewed to low complexity. A phosphoserine; by CDK1 mark is found at serine 259, serine 263, and serine 267. The segment covering 267 to 283 (SPRENGIDKNRLLKKDA) has biased composition (basic and acidic residues). The interval 269–450 (RENGIDKNRL…GGKPAYSFHV (182 aa)) is SP domain. Low complexity predominate over residues 284–298 (SSSPASTASSASSTS). A Phosphoserine modification is found at serine 286. The span at 300-310 (KSKEMSLHEKA) shows a compositional bias: basic and acidic residues. WD repeat units follow at residues 470–501 (GIPRHARQINTLNHGEVVCAVTISNPTRHVYT), 528–558 (NRDNYIRSCKLLPDGCTLIVGGEASTLSIWD), 572–602 (SSAPACYALAISPDSKVCFSCCSDGNIAVWD), 614–644 (GHTDGASCIDISNDGTKLWTGGLDNTVRSWD), 696–726 (LHESCVLSLKFAYCGKWFVSTGKDNLLNAWR), and 737–767 (KESSSVLSCDISVDDKYIVTGSGDKKATVYE).

It belongs to the WD repeat Groucho/TLE family. In terms of assembly, homooligomer and heterooligomer with other family members. Binds RUNX1, RUNX3, FOXA2, KDM6A, UTY, histone H3, HESX1, ESRRG and the NF-kappa-B subunit RELA. Interacts with HES1 (via WRPW motif). Binds TCF7, LEF1, TCF7L1 and TCF7L2. Interacts with SIX3. Interacts with EFNB1. Interacts with TLE4. Interacts with FOXG1/BF-1; the interaction is inhibited by TLE6/GRG6. Phosphorylated, probably by CDK1. The degree of phosphorylation varies throughout the cell cycle, and is highest at the G2/M transition. Becomes hyperphosphorylated in response to cell differentiation and interaction with HES1 or RUNX1. Post-translationally, ubiquitinated by XIAP/BIRC4. In terms of tissue distribution, in all tissues examined, mostly in brain, liver and muscle.

Its subcellular location is the nucleus. Its function is as follows. Transcriptional corepressor that binds to a number of transcription factors. Inhibits NF-kappa-B-regulated gene expression. Inhibits the transcriptional activation mediated by FOXA2, and by CTNNB1 and TCF family members in Wnt signaling. Enhances FOXG1/BF-1- and HES1-mediated transcriptional repression. The effects of full-length TLE family members may be modulated by association with dominant-negative AES. Unusual function as coactivator for ESRRG. The polypeptide is Transducin-like enhancer protein 1 (TLE1) (Homo sapiens (Human)).